The primary structure comprises 266 residues: rRNA adenine N-6-methyltransferase (266 aa).

Positions 14, 16, 41, 62, 87, and 103 each coordinate S-adenosyl-L-methionine.

It belongs to the class I-like SAM-binding methyltransferase superfamily. rRNA adenine N(6)-methyltransferase family.

Its function is as follows. Involved in erythromycin resistance. The sequence is that of rRNA adenine N-6-methyltransferase (ermF) from Bacteroides fragilis.